The sequence spans 537 residues: Tyrosine-protein kinase Fyn (537 aa).

Gly-2 is lipidated: N-myristoyl glycine. Residues Cys-3 and Cys-6 are each lipidated (S-palmitoyl cysteine). The segment at 14–35 (LTEERDGSLNQSSGYRYGTDPT) is disordered. Phosphoserine occurs at positions 21 and 26. The 62-residue stretch at 82–143 (TGVTLFVALY…PSNYVAPVDS (62 aa)) folds into the SH3 domain. Residues 149 to 246 (WYFGKLGRKD…GLCCRLVVPC (98 aa)) enclose the SH2 domain. Tyr-185 carries the phosphotyrosine modification. Positions 271 to 524 (LQLIKRLGNG…YLQGFLEDYF (254 aa)) constitute a Protein kinase domain. ATP-binding positions include 277-285 (LGNGQFGEV) and Lys-299. Residue Asp-390 is the Proton acceptor of the active site. Residue Tyr-420 is modified to Phosphotyrosine; by autocatalysis. Tyr-531 is modified (phosphotyrosine).

It belongs to the protein kinase superfamily. Tyr protein kinase family. SRC subfamily. Interacts (via its SH3 domain) with PIK3R1 and PRMT8. Interacts with FYB1, PAG1, and SH2D1A. Interacts with CD79A (tyrosine-phosphorylated form); the interaction increases FYN activity. Interacts (via SH2 domain) with CSF1R (tyrosine phosphorylated). Interacts with TOM1L1 (phosphorylated form). Interacts with KDR (tyrosine phosphorylated). Interacts (via SH3 domain) with KLHL2 (via N-terminus). Interacts with SH2D1A and SLAMF1. Interacts with ITCH; the interaction phosphorylates ITCH and negatively regulates its activity. Interacts with FASLG. Interacts with RUNX3. Interacts with KIT. Interacts with EPHA8; possible downstream effector of EPHA8 in regulation of cell adhesion. Interacts with PTK2/FAK1; this interaction leads to PTK2/FAK1 phosphorylation and activation. Interacts with CAV1; this interaction couples integrins to the Ras-ERK pathway. Interacts with UNC119. Interacts (via SH2 domain) with PTPRH (phosphorylated form). Interacts with PTPRO (phosphorylated form). Interacts with PTPRB (phosphorylated form). Interacts with FYB2. Interacts with DSCAM. Interacts with SKAP1 and FYB1; this interaction promotes the phosphorylation of CLNK. Interacts with NEDD9; in the presence of PTK2. It depends on Mn(2+) as a cofactor. Post-translationally, autophosphorylated at Tyr-420. Phosphorylation on the C-terminal tail at Tyr-531 by CSK maintains the enzyme in an inactive state. PTPRC/CD45 dephosphorylates Tyr-531 leading to activation. Dephosphorylation at Tyr-420 by PTPN2 negatively regulates T-cell receptor signaling. Phosphorylated at tyrosine residues, which can be enhanced by NTN1. Palmitoylated. Palmitoylation at Cys-3 and Cys-6, probably by ZDHHC21, regulates subcellular location. In terms of tissue distribution, detected in spinal cord oligodendrocytes (at protein level).

It localises to the cytoplasm. It is found in the nucleus. The protein resides in the cell membrane. Its subcellular location is the perikaryon. The catalysed reaction is L-tyrosyl-[protein] + ATP = O-phospho-L-tyrosyl-[protein] + ADP + H(+). Its activity is regulated as follows. Inhibited by phosphorylation of Tyr-531 by leukocyte common antigen and activated by dephosphorylation of this site. Its function is as follows. Non-receptor tyrosine-protein kinase that plays a role in many biological processes including regulation of cell growth and survival, cell adhesion, integrin-mediated signaling, cytoskeletal remodeling, cell motility, immune response and axon guidance. Inactive FYN is phosphorylated on its C-terminal tail within the catalytic domain. Following activation by PKA, the protein subsequently associates with PTK2/FAK1, allowing PTK2/FAK1 phosphorylation, activation and targeting to focal adhesions. Involved in the regulation of cell adhesion and motility through phosphorylation of CTNNB1 (beta-catenin) and CTNND1 (delta-catenin). Regulates cytoskeletal remodeling by phosphorylating several proteins including the actin regulator WAS and the microtubule-associated proteins MAP2 and MAPT. Promotes cell survival by phosphorylating AGAP2/PIKE-A and preventing its apoptotic cleavage. Participates in signal transduction pathways that regulate the integrity of the glomerular slit diaphragm (an essential part of the glomerular filter of the kidney) by phosphorylating several slit diaphragm components including NPHS1, KIRREL1 and TRPC6. Plays a role in neural processes by phosphorylating DPYSL2, a multifunctional adapter protein within the central nervous system, ARHGAP32, a regulator for Rho family GTPases implicated in various neural functions, and SNCA, a small pre-synaptic protein. Involved in reelin signaling by mediating phosphorylation of DAB1 following reelin (RELN)-binding to its receptor. Participates in the downstream signaling pathways that lead to T-cell differentiation and proliferation following T-cell receptor (TCR) stimulation. Phosphorylates PTK2B/PYK2 in response to T-cell receptor activation. Also participates in negative feedback regulation of TCR signaling through phosphorylation of PAG1, thereby promoting interaction between PAG1 and CSK and recruitment of CSK to lipid rafts. CSK maintains LCK and FYN in an inactive form. Promotes CD28-induced phosphorylation of VAV1. In mast cells, phosphorylates CLNK after activation of immunoglobulin epsilon receptor signaling. Can also promote CD244-mediated NK cell activation. This is Tyrosine-protein kinase Fyn from Rattus norvegicus (Rat).